The primary structure comprises 1004 residues: Caspase recruitment domain-containing protein 14 (1004 aa).

In terms of domain architecture, CARD spans 15–107; sequence DEETLWEMME…DVYTLVTGLQ (93 aa). Residues 128 to 409 are a coiled coil; sequence LAGAIGSLQE…RTQLRQLQAE (282 aa). A maintains the protein in an inactive state region spans residues 409–568; sequence EPPGVLKQEA…RRPARRILSQ (160 aa). Residue serine 544 is modified to Phosphoserine. Positions 568–658 constitute a PDZ domain; that stretch reads QVTMLAFQGD…FCCLSVKVNT (91 aa). The Guanylate kinase-like domain occupies 807-990; sequence AESCLTLVPY…LLSCVRQAIA (184 aa).

Interacts (via CARD domain) with BCL10 (via CARD domain). Forms a complex with MALT1 and BCL10; resulting in the formation of a CBM (CARD14-BLC10-MALT1) complex. Interacts with TRAF2, TRAF3 and TRAF6. As to expression, isoform 1 is detected in placenta and epidermal keratinocytes. Isoform 2 is detected in leukocytes and fetal brain.

It is found in the cytoplasm. Functionally, acts as a scaffolding protein that can activate the inflammatory transcription factor NF-kappa-B and p38/JNK MAP kinase signaling pathways. Forms a signaling complex with BCL10 and MALT1, and activates MALT1 proteolytic activity and inflammatory gene expression. MALT1 is indispensable for CARD14-induced activation of NF-kappa-B and p38/JNK MAP kinases. May play a role in signaling mediated by TRAF2, TRAF3 and TRAF6 and protects cells against apoptosis. In terms of biological role, not able to activate the inflammatory transcription factor NF-kappa-B and may function as a dominant negative regulator. The protein is Caspase recruitment domain-containing protein 14 (CARD14) of Homo sapiens (Human).